A 207-amino-acid polypeptide reads, in one-letter code: MAPLAALASSMLLLLWLVAPSRACTCVPPHPQTAFCNSDLVIRAKFVGAPEVNHTTLYQRYEIKTTKMFKGFDALGHATDIRFVYTPAMESVCGYSHKSQNRSEEFLIAGQLRNGLLHITTCSFVVPWNSLSFSQRSGFTKTYAAGCDMCTVFACASIPCHLESDTHCLWTDQLLLGSDKGFQSRHLACLPQEPGLCAWQSLRPRKD.

Residues 1–23 (MAPLAALASSMLLLLWLVAPSRA) form the signal peptide. Cys24 contributes to the Zn(2+) binding site. The interval 24–27 (CTCV) is involved in metalloproteinase-binding. 6 disulfide bridges follow: Cys24–Cys93, Cys26–Cys122, Cys36–Cys147, Cys150–Cys197, Cys155–Cys160, and Cys168–Cys189. The 124-residue stretch at 24-147 (CTCVPPHPQT…GFTKTYAAGC (124 aa)) folds into the NTR domain. Asn53 carries N-linked (GlcNAc...) asparagine glycosylation. The segment at 90-91 (ES) is involved in metalloproteinase-binding. An N-linked (GlcNAc...) asparagine glycan is attached at Asn101. The residue at position 178 (Ser178) is a Phosphoserine.

This sequence belongs to the protease inhibitor I35 (TIMP) family. Interacts with MMP1, MMP3, MMP10 and MMP13, but has only very low affinity for MMP14. Interacts with CD63; identified in a complex with CD63 and ITGB1. The activity of TIMP1 is dependent on the presence of disulfide bonds. In terms of processing, N-glycosylated.

The protein localises to the secreted. Its function is as follows. Metalloproteinase inhibitor that functions by forming one to one complexes with target metalloproteinases, such as collagenases, and irreversibly inactivates them by binding to their catalytic zinc cofactor. Acts on MMP1, MMP2, MMP3, MMP7, MMP8, MMP9, MMP10, MMP11, MMP12, MMP13 and MMP16. Does not act on MMP14. Also functions as a growth factor that regulates cell differentiation, migration and cell death and activates cellular signaling cascades via CD63 and ITGB1. Plays a role in integrin signaling. This is Metalloproteinase inhibitor 1 (TIMP1) from Oryctolagus cuniculus (Rabbit).